Consider the following 468-residue polypeptide: MSKGTLFDKVWDAHTVQILPSGQTQLFIGLHLIHEVTSPQAFAMLRERGLKVLYPDRTVATVDHIVPTENQARPFADYLAEEMMQALEKNAQDNGIRFCHIGSGDQGIVHVIAPEQGLTQPGMTIACGDSHTSTHGAFGAIAFGIGTSQVRDVLASQTLALAKLKVRKIEVNGTLAPGVYAKDVILHIIRKLGVKGGVGYAYEYAGTTFEAMSMEERMTVCNMAIEGGARCGYINPDQVTFDYLKGRDFAPTGENWDKAVEWWQSIRSDADAEYDDVIVFDAKDIEPTVTWGITPGQGIGVSEVIPIPDSLPESDRAIAKEAYEYMQLSPGAPIKGTKVDVCFIGSCTNGRISDLREAAKFAQGHHVSPGVKAFVVPGSERVKVQAEAEGLDKIFVEAGFEWREAGCSMCLAMNPDKLQGDQISASSSNRNFKGRQGSSTGRTLLMSPAMVVAAAINGQVSDVRELVS.

3 residues coordinate [4Fe-4S] cluster: C347, C407, and C410.

Belongs to the aconitase/IPM isomerase family. LeuC type 1 subfamily. In terms of assembly, heterodimer of LeuC and LeuD. [4Fe-4S] cluster serves as cofactor.

The catalysed reaction is (2R,3S)-3-isopropylmalate = (2S)-2-isopropylmalate. It functions in the pathway amino-acid biosynthesis; L-leucine biosynthesis; L-leucine from 3-methyl-2-oxobutanoate: step 2/4. Its function is as follows. Catalyzes the isomerization between 2-isopropylmalate and 3-isopropylmalate, via the formation of 2-isopropylmaleate. The protein is 3-isopropylmalate dehydratase large subunit of Rippkaea orientalis (strain PCC 8801 / RF-1) (Cyanothece sp. (strain PCC 8801)).